The chain runs to 273 residues: Ribonuclease PH (273 aa).

Phosphate-binding positions include Arg-86 and 124 to 126 (GTR). The segment at 254–273 (GHQEPGEGAGVSLAPGGGGL) is disordered.

The protein belongs to the RNase PH family. As to quaternary structure, homohexameric ring arranged as a trimer of dimers.

The enzyme catalyses tRNA(n+1) + phosphate = tRNA(n) + a ribonucleoside 5'-diphosphate. Its function is as follows. Phosphorolytic 3'-5' exoribonuclease that plays an important role in tRNA 3'-end maturation. Removes nucleotide residues following the 3'-CCA terminus of tRNAs; can also add nucleotides to the ends of RNA molecules by using nucleoside diphosphates as substrates, but this may not be physiologically important. Probably plays a role in initiation of 16S rRNA degradation (leading to ribosome degradation) during starvation. The chain is Ribonuclease PH from Symbiobacterium thermophilum (strain DSM 24528 / JCM 14929 / IAM 14863 / T).